A 126-amino-acid polypeptide reads, in one-letter code: Small ribosomal subunit protein uS11 (126 aa).

It belongs to the universal ribosomal protein uS11 family. As to quaternary structure, part of the 30S ribosomal subunit. Interacts with proteins S7 and S18. Binds to IF-3.

Its function is as follows. Located on the platform of the 30S subunit, it bridges several disparate RNA helices of the 16S rRNA. Forms part of the Shine-Dalgarno cleft in the 70S ribosome. The polypeptide is Small ribosomal subunit protein uS11 (Orientia tsutsugamushi (strain Boryong) (Rickettsia tsutsugamushi)).